Here is a 379-residue protein sequence, read N- to C-terminus: Forkhead box protein F1 (379 aa).

The tract at residues 1–45 is disordered; sequence MSSAPEKQQPPHGGGGGGGGGGGAAMDPASSGPSKAKKTNAGIRR. Residues 12–24 are compositionally biased toward gly residues; sequence HGGGGGGGGGGGA. The segment at residues 47–138 is a DNA-binding region (fork-head); sequence EKPPYSYIAL…EFMFEEGSFR (92 aa).

As to expression, expressed in lung and placenta.

It localises to the nucleus. Its function is as follows. Probable transcription activator for a number of lung-specific genes. This is Forkhead box protein F1 (FOXF1) from Homo sapiens (Human).